Here is a 424-residue protein sequence, read N- to C-terminus: Appressorium protein ROW1 (424 aa).

The signal sequence occupies residues 1 to 21 (MTKLTLTVALVSALLASGASA). 4 disordered regions span residues 19-54 (ASAQ…WQPK), 69-90 (ANRI…GYNT), 278-304 (SGST…CSSV), and 327-398 (SSSA…TQGA). Over 22–403 (QQPTGTGNGP…NTQGAASSAS (382 aa)) the chain is Extracellular. Residues 37 to 54 (TDLNRNQPTKSWTQWQPK) are compositionally biased toward polar residues. Composition is skewed to low complexity over residues 295–304 (APSSSQCSSV) and 327–347 (SSSA…SASS). Residues 362 to 382 (SGTGSGSGSGSGSGSGSGSGS) are compositionally biased toward gly residues. The span at 383 to 398 (SSGSSSSGSSSNTQGA) shows a compositional bias: low complexity. The chain crosses the membrane as a helical span at residues 404 to 424 (SLTISVGLAGLVAIGAAAFAL).

The protein resides in the cell membrane. It is found in the secreted. Functionally, plays a role in the formation of the appressorium, a specialized infection structure with the purpose of penetrating the host surface, and is required for proper remodeling of the appressorium wall and vesicle secretion. The protein is Appressorium protein ROW1 of Mycosarcoma maydis (Corn smut fungus).